The primary structure comprises 104 residues: Gastrin (104 aa).

The N-terminal stretch at 1-21 (MQRLCAHALILVLALAAFCEA) is a signal peptide. A propeptide spanning residues 22 to 58 (SWKPHSQLQDAPVAPGANKGQEPLRMDRLGPASHPRR) is cleaved from the precursor. Residues 26-70 (HSQLQDAPVAPGANKGQEPLRMDRLGPASHPRRQLGLQDPPHMVA) form a disordered region. Position 87 is a sulfotyrosine (Tyr-87). Phenylalanine amide is present on Phe-92. A Phosphoserine modification is found at Ser-96. Positions 96–104 (SAEEGDQHP) are excised as a propeptide.

This sequence belongs to the gastrin/cholecystokinin family. Post-translationally, sulfation enhances proteolytic processing, and blocks peptide degradation. Levels of sulfation differ between proteolytically-cleaved gastrins and between tissues.

It localises to the secreted. Functionally, gastrin stimulates the stomach mucosa to produce and secrete hydrochloric acid and the pancreas to secrete its digestive enzymes. It also stimulates smooth muscle contraction and increases blood circulation and water secretion in the stomach and intestine. In Ovis aries (Sheep), this protein is Gastrin (GAST).